The primary structure comprises 165 residues: SsrA-binding protein (165 aa).

The interval 141-165 is disordered; it reads KLHDKRQDEKRKQADREVKSALARY. Basic and acidic residues predominate over residues 145–159; it reads KRQDEKRKQADREVK.

It belongs to the SmpB family.

The protein resides in the cytoplasm. In terms of biological role, required for rescue of stalled ribosomes mediated by trans-translation. Binds to transfer-messenger RNA (tmRNA), required for stable association of tmRNA with ribosomes. tmRNA and SmpB together mimic tRNA shape, replacing the anticodon stem-loop with SmpB. tmRNA is encoded by the ssrA gene; the 2 termini fold to resemble tRNA(Ala) and it encodes a 'tag peptide', a short internal open reading frame. During trans-translation Ala-aminoacylated tmRNA acts like a tRNA, entering the A-site of stalled ribosomes, displacing the stalled mRNA. The ribosome then switches to translate the ORF on the tmRNA; the nascent peptide is terminated with the 'tag peptide' encoded by the tmRNA and targeted for degradation. The ribosome is freed to recommence translation, which seems to be the essential function of trans-translation. This is SsrA-binding protein from Prochlorococcus marinus (strain MIT 9313).